A 252-amino-acid chain; its full sequence is tRNA (guanine-N(1)-)-methyltransferase (252 aa).

S-adenosyl-L-methionine is bound by residues G117 and 137-142 (IGDYVL).

It belongs to the RNA methyltransferase TrmD family. Homodimer.

The protein localises to the cytoplasm. The catalysed reaction is guanosine(37) in tRNA + S-adenosyl-L-methionine = N(1)-methylguanosine(37) in tRNA + S-adenosyl-L-homocysteine + H(+). Functionally, specifically methylates guanosine-37 in various tRNAs. In Idiomarina loihiensis (strain ATCC BAA-735 / DSM 15497 / L2-TR), this protein is tRNA (guanine-N(1)-)-methyltransferase.